A 505-amino-acid chain; its full sequence is Cytochrome P450 9b2 (505 aa).

A heme-binding site is contributed by Cys-449.

Belongs to the cytochrome P450 family. Requires heme as cofactor.

Its subcellular location is the endoplasmic reticulum membrane. The protein localises to the microsome membrane. Its function is as follows. May be involved in the metabolism of insect hormones and in the breakdown of synthetic insecticides. The polypeptide is Cytochrome P450 9b2 (Cyp9b2) (Drosophila melanogaster (Fruit fly)).